The following is a 135-amino-acid chain: MVQLTTVLCKAYRGGHLTIRLALGGCTNRPFYRIVAAHNKCPRDGRFVEQLGSYDPMPNSHGEKLVALNLDRIRHWIGCGAHLSKPVEKLLGLSGFFPLHPMVITNAERLRRKRAQEVLLAAQKTDTEATETKEN.

Residues 1–34 (MVQLTTVLCKAYRGGHLTIRLALGGCTNRPFYRI) constitute a mitochondrion transit peptide. Threonine 130 bears the Phosphothreonine mark.

This sequence belongs to the bacterial ribosomal protein bS16 family. As to quaternary structure, component of the mitochondrial ribosome small subunit (28S) which comprises a 12S rRNA and about 30 distinct proteins.

The protein resides in the mitochondrion. In Bos taurus (Bovine), this protein is Small ribosomal subunit protein bS16m (MRPS16).